Reading from the N-terminus, the 744-residue chain is Elongation factor G, mitochondrial (744 aa).

One can recognise a tr-type G domain in the interval 39-316 (EKIRNIGISA…AVIDYLPNPG (278 aa)). Residues 48–55 (AHIDSGKT), 115–119 (DTPGH), and 169–172 (NKLD) contribute to the GTP site. A compositionally biased stretch (polar residues) spans 725–735 (VRQYQETQGAS). Residues 725–744 (VRQYQETQGASQPDKKKKKN) are disordered.

Belongs to the TRAFAC class translation factor GTPase superfamily. Classic translation factor GTPase family. EF-G/EF-2 subfamily.

Its subcellular location is the mitochondrion. Its pathway is protein biosynthesis; polypeptide chain elongation. Functionally, mitochondrial GTPase that catalyzes the GTP-dependent ribosomal translocation step during translation elongation. During this step, the ribosome changes from the pre-translocational (PRE) to the post-translocational (POST) state as the newly formed A-site-bound peptidyl-tRNA and P-site-bound deacylated tRNA move to the P and E sites, respectively. Catalyzes the coordinated movement of the two tRNA molecules, the mRNA and conformational changes in the ribosome. Essential during development as it acts as a retrograde signal from mitochondria to the nucleus to slow down cell proliferation if mitochondrial energy output is low. This Drosophila pseudoobscura pseudoobscura (Fruit fly) protein is Elongation factor G, mitochondrial.